A 183-amino-acid chain; its full sequence is MRLFGYARVSTSQQSLDIQVRALKDAGVKANRIFTDKASGSSSDRKGLDLLRMKVEEGDVILVKKLDRLGRDTADMIQLIKEFDAQGVSIRFIDDGISTDGEMGKMVVTILSAVAQAERQRILERTNEGRQEAMAKGVVFGRKRKIDRDAVLNMWQQGLGASHISKTMNIARSTVYKVINESN.

One can recognise a Resolvase/invertase-type recombinase catalytic domain in the interval 2–137; that stretch reads RLFGYARVST…EGRQEAMAKG (136 aa). The O-(5'-phospho-DNA)-serine intermediate role is filled by S10. Residues 161-180 constitute a DNA-binding region (H-T-H motif); that stretch reads ASHISKTMNIARSTVYKVIN.

This sequence belongs to the site-specific recombinase resolvase family.

This protein catalyzes the site-specific recombination of the transposon and also regulates its frequency of transposition. This chain is Transposon gamma-delta resolvase (tnpR), found in Escherichia coli (strain K12).